Here is a 274-residue protein sequence, read N- to C-terminus: NH(3)-dependent NAD(+) synthetase (274 aa).

46-53 (GISGGQDS) contacts ATP. Residue Asp-52 participates in Mg(2+) binding. Residue Arg-140 coordinates deamido-NAD(+). Thr-160 serves as a coordination point for ATP. Glu-165 contributes to the Mg(2+) binding site. The deamido-NAD(+) site is built by Lys-173 and Asp-180. ATP-binding residues include Lys-189 and Thr-211. 260-261 (HK) is a deamido-NAD(+) binding site.

It belongs to the NAD synthetase family. In terms of assembly, homodimer.

The catalysed reaction is deamido-NAD(+) + NH4(+) + ATP = AMP + diphosphate + NAD(+) + H(+). It functions in the pathway cofactor biosynthesis; NAD(+) biosynthesis; NAD(+) from deamido-NAD(+) (ammonia route): step 1/1. In terms of biological role, catalyzes the ATP-dependent amidation of deamido-NAD to form NAD. Uses ammonia as a nitrogen source. The protein is NH(3)-dependent NAD(+) synthetase of Streptococcus equi subsp. zooepidemicus (strain MGCS10565).